Here is a 1489-residue protein sequence, read N- to C-terminus: Chromosome partition protein MukB (1489 aa).

34 to 41 is an ATP binding site; that stretch reads GGNGAGKS. Coiled coils occupy residues 326-418, 444-472, 509-602, 780-805, 835-919, 977-1116, and 1209-1266; these read LEAD…QYNQ, LETFQAKEQEATEKLLSLEQKMSVAQTAH, RHLA…QRAP, RAARENRIESLHAEREGLSERFATLS, EAEI…GNQL, EMLS…AKAG, and VEAI…QNVS. The interval 666-783 is flexible hinge; the sequence is PGGSEDSRLN…TVPIFGRAAR (118 aa).

This sequence belongs to the SMC family. MukB subfamily. In terms of assembly, homodimerization via its hinge domain. Binds to DNA via its C-terminal region. Interacts, and probably forms a ternary complex, with MukE and MukF via its C-terminal region. The complex formation is stimulated by calcium or magnesium. Interacts with tubulin-related protein FtsZ.

It localises to the cytoplasm. The protein localises to the nucleoid. Functionally, plays a central role in chromosome condensation, segregation and cell cycle progression. Functions as a homodimer, which is essential for chromosome partition. Involved in negative DNA supercoiling in vivo, and by this means organize and compact chromosomes. May achieve or facilitate chromosome segregation by condensation DNA from both sides of a centrally located replisome during cell division. In Citrobacter koseri (strain ATCC BAA-895 / CDC 4225-83 / SGSC4696), this protein is Chromosome partition protein MukB.